The sequence spans 370 residues: Holliday junction branch migration complex subunit RuvB 2 (370 aa).

Positions methionine 1–arginine 54 are disordered. The segment at aspartate 13–tyrosine 214 is large ATPase domain (RuvB-L). Residues leucine 53, arginine 54, glycine 95, lysine 98, threonine 99, threonine 100, glutamate 161 to phenylalanine 163, arginine 204, tyrosine 214, and arginine 251 contribute to the ATP site. Residue threonine 99 coordinates Mg(2+). Positions glutamate 215 to glutamine 285 are small ATPAse domain (RuvB-S). The segment at proline 288 to serine 370 is head domain (RuvB-H). The DNA site is built by arginine 343 and arginine 348.

It belongs to the RuvB family. Homohexamer. Forms an RuvA(8)-RuvB(12)-Holliday junction (HJ) complex. HJ DNA is sandwiched between 2 RuvA tetramers; dsDNA enters through RuvA and exits via RuvB. An RuvB hexamer assembles on each DNA strand where it exits the tetramer. Each RuvB hexamer is contacted by two RuvA subunits (via domain III) on 2 adjacent RuvB subunits; this complex drives branch migration. In the full resolvosome a probable DNA-RuvA(4)-RuvB(12)-RuvC(2) complex forms which resolves the HJ.

It localises to the cytoplasm. The catalysed reaction is ATP + H2O = ADP + phosphate + H(+). In terms of biological role, the RuvA-RuvB-RuvC complex processes Holliday junction (HJ) DNA during genetic recombination and DNA repair, while the RuvA-RuvB complex plays an important role in the rescue of blocked DNA replication forks via replication fork reversal (RFR). RuvA specifically binds to HJ cruciform DNA, conferring on it an open structure. The RuvB hexamer acts as an ATP-dependent pump, pulling dsDNA into and through the RuvAB complex. RuvB forms 2 homohexamers on either side of HJ DNA bound by 1 or 2 RuvA tetramers; 4 subunits per hexamer contact DNA at a time. Coordinated motions by a converter formed by DNA-disengaged RuvB subunits stimulates ATP hydrolysis and nucleotide exchange. Immobilization of the converter enables RuvB to convert the ATP-contained energy into a lever motion, pulling 2 nucleotides of DNA out of the RuvA tetramer per ATP hydrolyzed, thus driving DNA branch migration. The RuvB motors rotate together with the DNA substrate, which together with the progressing nucleotide cycle form the mechanistic basis for DNA recombination by continuous HJ branch migration. Branch migration allows RuvC to scan DNA until it finds its consensus sequence, where it cleaves and resolves cruciform DNA. The polypeptide is Holliday junction branch migration complex subunit RuvB 2 (Synechococcus sp. (strain JA-3-3Ab) (Cyanobacteria bacterium Yellowstone A-Prime)).